The primary structure comprises 303 residues: 1D-myo-inositol 2-acetamido-2-deoxy-alpha-D-glucopyranoside deacetylase (303 aa).

Histidine 15, aspartate 18, and histidine 157 together coordinate Zn(2+).

This sequence belongs to the MshB deacetylase family. It depends on Zn(2+) as a cofactor.

The catalysed reaction is 1D-myo-inositol 2-acetamido-2-deoxy-alpha-D-glucopyranoside + H2O = 1D-myo-inositol 2-amino-2-deoxy-alpha-D-glucopyranoside + acetate. Functionally, catalyzes the deacetylation of 1D-myo-inositol 2-acetamido-2-deoxy-alpha-D-glucopyranoside (GlcNAc-Ins) in the mycothiol biosynthesis pathway. In Kribbella flavida (strain DSM 17836 / JCM 10339 / NBRC 14399), this protein is 1D-myo-inositol 2-acetamido-2-deoxy-alpha-D-glucopyranoside deacetylase.